A 472-amino-acid polypeptide reads, in one-letter code: MSLVEPTEPVEVDKLGRVHFIGMGGAGMSGIARVLLQRGVEVSGSDARDSALLRELEELGATVHVGHAAEHVGDADTVVVSSAIRDTNPELVEARARNLRILPRAAALGALLLGRCGVAVAGTHGKTTTTSMITVVLQHLGAMPGYVIGGQLVTTGLGADAGADDIIVVEADESDGSFLMLSPRVAVITNVEADHLDNYGDLEEIHDKFAAFIGRVSETVVVGVDDPGARRVAEVARQRGLKVLTYGEADTADYRVRDITVDGFTTMFTIDPPTGDPVHCTLPLPGRHNTLNAAAAVAVADTIGYDPEVAVEGLAEFAGAARRFEFKGEANGVSVYDSYAHHPTEIAADLDAARAALDSQAAKGGKAGRIVVLFQPHLYSRTRIFAEEFAAALTKADEVVVLGIYAAREDPEPGVTAELITERIGHDRVYYRPDRDAAVECVVSVAQPGDIVLTMGAGDVTELGPRIVEALG.

Position 122-128 (122-128 (GTHGKTT)) interacts with ATP.

It belongs to the MurCDEF family.

Its subcellular location is the cytoplasm. It catalyses the reaction UDP-N-acetyl-alpha-D-muramate + L-alanine + ATP = UDP-N-acetyl-alpha-D-muramoyl-L-alanine + ADP + phosphate + H(+). Its pathway is cell wall biogenesis; peptidoglycan biosynthesis. Functionally, cell wall formation. In Thermobifida fusca (strain YX), this protein is UDP-N-acetylmuramate--L-alanine ligase.